A 391-amino-acid polypeptide reads, in one-letter code: Chorismate synthase (391 aa).

Position 48 (Arg-48) interacts with NADP(+). FMN-binding positions include Arg-126–Ser-128, Gly-286, Lys-301–Ser-305, and Arg-328.

Belongs to the chorismate synthase family. FMNH2 serves as cofactor.

It carries out the reaction 5-O-(1-carboxyvinyl)-3-phosphoshikimate = chorismate + phosphate. It participates in metabolic intermediate biosynthesis; chorismate biosynthesis; chorismate from D-erythrose 4-phosphate and phosphoenolpyruvate: step 7/7. Catalyzes the anti-1,4-elimination of the C-3 phosphate and the C-6 proR hydrogen from 5-enolpyruvylshikimate-3-phosphate (EPSP) to yield chorismate, which is the branch point compound that serves as the starting substrate for the three terminal pathways of aromatic amino acid biosynthesis. This reaction introduces a second double bond into the aromatic ring system. The protein is Chorismate synthase of Saccharolobus islandicus (strain Y.N.15.51 / Yellowstone #2) (Sulfolobus islandicus).